We begin with the raw amino-acid sequence, 63 residues long: Cecropin-A1 (63 aa).

Residues 1-23 (MKFYNIFVFVALILAITIGQSEA) form the signal peptide. R62 carries the post-translational modification Arginine amide.

This sequence belongs to the cecropin family.

It is found in the secreted. In terms of biological role, cecropins have lytic and antibacterial activity against several Gram-positive and Gram-negative bacteria. The protein is Cecropin-A1 (CecA1) of Drosophila mauritiana (Fruit fly).